The primary structure comprises 236 residues: Phycocyanobilin:ferredoxin oxidoreductase (236 aa).

It belongs to the HY2 family.

It catalyses the reaction (2R,3Z)-phycocyanobilin + 4 oxidized [2Fe-2S]-[ferredoxin] = biliverdin IXalpha + 4 reduced [2Fe-2S]-[ferredoxin] + 4 H(+). Its function is as follows. Catalyzes the four-electron reduction of biliverdin IX-alpha (2-electron reduction at both the A and D rings); the reaction proceeds via an isolatable 2-electron intermediate, 181,182-dihydrobiliverdin. The protein is Phycocyanobilin:ferredoxin oxidoreductase (pcyA) of Thermosynechococcus vestitus (strain NIES-2133 / IAM M-273 / BP-1).